We begin with the raw amino-acid sequence, 659 residues long: Pentatricopeptide repeat-containing protein At3g26782, mitochondrial (659 aa).

A mitochondrion-targeting transit peptide spans 1-24 (MKVRSKKALFCSVSRLLHTERHTE). PPR repeat units follow at residues 40 to 74 (DVFS…SLYP), 75 to 109 (TRSS…GYQS), 110 to 144 (DIFV…NIVS), 145 to 171 (WTSM…LLVD), 182 to 216 (DSMG…GFDR), 217 to 249 (GVSV…IVDK), 250 to 284 (DRVS…KVVT), 286 to 320 (NAIT…GLED), 321 to 351 (DVIV…MKNK), 352 to 386 (NVRS…GVRP), 387 to 422 (NYIT…GVEP), and 423 to 453 (GLEH…MKMK). Residues 458-533 (IWSSLLAACR…PPGFSLLELN (76 aa)) form a type E motif region. The type E(+) motif stretch occupies residues 534 to 564 (GEVHVFLIGDEEHPQREKIYEFLAELNRKLL). Residues 565-659 (EAGYVSNTSS…DGGCSCGDYW (95 aa)) form a type DYW motif region.

The protein belongs to the PPR family. PCMP-H subfamily.

It is found in the mitochondrion. In Arabidopsis thaliana (Mouse-ear cress), this protein is Pentatricopeptide repeat-containing protein At3g26782, mitochondrial (PCMP-H34).